The sequence spans 1029 residues: Exportin-T (1029 aa).

Belongs to the exportin family.

The protein resides in the nucleus. It is found in the cytoplasm. TRNA nucleus export receptor which facilitates tRNA translocation across the nuclear pore complex. Involved in pre-tRNA splicing, probably by affecting the interaction of pre-tRNA with splicing endonuclease. In Aspergillus clavatus (strain ATCC 1007 / CBS 513.65 / DSM 816 / NCTC 3887 / NRRL 1 / QM 1276 / 107), this protein is Exportin-T (los1).